The following is a 176-amino-acid chain: N5-carboxyaminoimidazole ribonucleotide mutase (176 aa).

Ser14, Asp17, and Arg44 together coordinate substrate.

It belongs to the AIR carboxylase family. Class I subfamily.

It catalyses the reaction 5-carboxyamino-1-(5-phospho-D-ribosyl)imidazole + H(+) = 5-amino-1-(5-phospho-D-ribosyl)imidazole-4-carboxylate. It functions in the pathway purine metabolism; IMP biosynthesis via de novo pathway; 5-amino-1-(5-phospho-D-ribosyl)imidazole-4-carboxylate from 5-amino-1-(5-phospho-D-ribosyl)imidazole (N5-CAIR route): step 2/2. Functionally, catalyzes the conversion of N5-carboxyaminoimidazole ribonucleotide (N5-CAIR) to 4-carboxy-5-aminoimidazole ribonucleotide (CAIR). The sequence is that of N5-carboxyaminoimidazole ribonucleotide mutase from Synechocystis sp. (strain ATCC 27184 / PCC 6803 / Kazusa).